Reading from the N-terminus, the 455-residue chain is Bifunctional protein GlmU (455 aa).

The tract at residues 1–230 (MTKRNAIILA…FDESMGVNDR (230 aa)) is pyrophosphorylase. UDP-N-acetyl-alpha-D-glucosamine is bound by residues 9–12 (LAAG), Lys23, Gln73, 78–79 (GT), 101–103 (SGD), Gly140, Glu155, Asn170, and Asn228. Residue Asp103 participates in Mg(2+) binding. Mg(2+) is bound at residue Asn228. The linker stretch occupies residues 231–251 (VALARANKVMRNRINTHWMRE). Residues 252–455 (GVSMIDPETT…KENYAKKLPW (204 aa)) are N-acetyltransferase. Residues Arg333 and Lys351 each contribute to the UDP-N-acetyl-alpha-D-glucosamine site. The active-site Proton acceptor is the His363. Residues Tyr366 and Asn377 each contribute to the UDP-N-acetyl-alpha-D-glucosamine site. Residues 386 to 387 (NY), Ser405, Ala423, and Arg440 each bind acetyl-CoA.

It in the N-terminal section; belongs to the N-acetylglucosamine-1-phosphate uridyltransferase family. This sequence in the C-terminal section; belongs to the transferase hexapeptide repeat family. As to quaternary structure, homotrimer. Mg(2+) is required as a cofactor.

The protein localises to the cytoplasm. It carries out the reaction alpha-D-glucosamine 1-phosphate + acetyl-CoA = N-acetyl-alpha-D-glucosamine 1-phosphate + CoA + H(+). The enzyme catalyses N-acetyl-alpha-D-glucosamine 1-phosphate + UTP + H(+) = UDP-N-acetyl-alpha-D-glucosamine + diphosphate. Its pathway is nucleotide-sugar biosynthesis; UDP-N-acetyl-alpha-D-glucosamine biosynthesis; N-acetyl-alpha-D-glucosamine 1-phosphate from alpha-D-glucosamine 6-phosphate (route II): step 2/2. It functions in the pathway nucleotide-sugar biosynthesis; UDP-N-acetyl-alpha-D-glucosamine biosynthesis; UDP-N-acetyl-alpha-D-glucosamine from N-acetyl-alpha-D-glucosamine 1-phosphate: step 1/1. The protein operates within bacterial outer membrane biogenesis; LPS lipid A biosynthesis. Its function is as follows. Catalyzes the last two sequential reactions in the de novo biosynthetic pathway for UDP-N-acetylglucosamine (UDP-GlcNAc). The C-terminal domain catalyzes the transfer of acetyl group from acetyl coenzyme A to glucosamine-1-phosphate (GlcN-1-P) to produce N-acetylglucosamine-1-phosphate (GlcNAc-1-P), which is converted into UDP-GlcNAc by the transfer of uridine 5-monophosphate (from uridine 5-triphosphate), a reaction catalyzed by the N-terminal domain. In Limosilactobacillus reuteri (strain DSM 20016) (Lactobacillus reuteri), this protein is Bifunctional protein GlmU.